The sequence spans 212 residues: Protein-L-isoaspartate O-methyltransferase (212 aa).

The active site involves Ser61.

Belongs to the methyltransferase superfamily. L-isoaspartyl/D-aspartyl protein methyltransferase family.

The protein resides in the cytoplasm. The catalysed reaction is [protein]-L-isoaspartate + S-adenosyl-L-methionine = [protein]-L-isoaspartate alpha-methyl ester + S-adenosyl-L-homocysteine. In terms of biological role, catalyzes the methyl esterification of L-isoaspartyl residues in peptides and proteins that result from spontaneous decomposition of normal L-aspartyl and L-asparaginyl residues. It plays a role in the repair and/or degradation of damaged proteins. The chain is Protein-L-isoaspartate O-methyltransferase from Pseudoalteromonas atlantica (strain T6c / ATCC BAA-1087).